We begin with the raw amino-acid sequence, 273 residues long: Vitamin B12-binding protein (273 aa).

Positions 1 to 18 (MMKTLSSLLLLFSVSLQA) are cleaved as a signal peptide. The Fe/B12 periplasmic-binding domain maps to 23–273 (RVISLAPHAT…EHFASIEQKR (251 aa)). C183 and C263 form a disulfide bridge.

Belongs to the BtuF family. The complex is composed of two ATP-binding proteins (BtuD), two transmembrane proteins (BtuC) and a solute-binding protein (BtuF).

It is found in the periplasm. Functionally, part of the ABC transporter complex BtuCDF involved in vitamin B12 import. Binds vitamin B12 and delivers it to the periplasmic surface of BtuC. This chain is Vitamin B12-binding protein, found in Vibrio vulnificus (strain CMCP6).